A 212-amino-acid chain; its full sequence is ER lumen protein-retaining receptor (212 aa).

Over 1–2 the chain is Lumenal; that stretch reads MN. Residues 3–21 form a helical membrane-spanning segment; it reads IFRFAGDLSHVFAIIILLL. Topologically, residues 22–35 are cytoplasmic; the sequence is KIWKTRSCAGISGK. Residues 36 to 53 traverse the membrane as a helical segment; sequence SQILFAVVYLTRYLDLFT. The Lumenal portion of the chain corresponds to 54 to 61; that stretch reads TYVSLYNS. A helical membrane pass occupies residues 62–80; it reads VMKVLFLATSGATVYLMYV. Residues 81–96 lie on the Cytoplasmic side of the membrane; sequence KFKATYDHNHDSFRIE. Residues 97–110 form a helical membrane-spanning segment; it reads FLLVPCALLSLVIN. Residues 111–117 lie on the Lumenal side of the membrane; that stretch reads HEFTVME. A helical transmembrane segment spans residues 118-137; sequence VLWTFSIYLESVAILPQLFL. Residues 138-149 are Cytoplasmic-facing; that stretch reads VSRTGEAESITS. The chain crosses the membrane as a helical span at residues 150 to 168; that stretch reads HYLFALGSYRALYLLNWVY. At 169-178 the chain is on the lumenal side; that stretch reads RYMVESHYDL. Residues 179–199 traverse the membrane as a helical segment; the sequence is IAIFAGVVQTVLYCDFFYLYI. At 200-212 the chain is on the cytoplasmic side; it reads TKVLKGKKLQLPA.

It belongs to the ERD2 family.

The protein localises to the endoplasmic reticulum membrane. In terms of biological role, required for the retention of luminal endoplasmic reticulum proteins. Determines the specificity of the luminal ER protein retention system. Also required for normal vesicular traffic through the Golgi. This Drosophila melanogaster (Fruit fly) protein is ER lumen protein-retaining receptor (KdelR).